The chain runs to 102 residues: MASSDRFPLFCCVRNCIFRVSVDRVQPFIAHLRDHFGEKPGTSIRFRCPRCETILWRFPLGETVPDEMNIRRAWNHVALIQNECRSPETQIMCIHFLVDPES.

This is an uncharacterized protein from Ictaluridae (bullhead catfishes).